We begin with the raw amino-acid sequence, 74 residues long: Kappa-scoloptoxin(07)-Ssm2e (74 aa).

The N-terminal stretch at 1 to 19 (MLVFYALLFVSVFSNTVMG) is a signal peptide. Positions 20 to 41 (ATIDMPIPKPILREAIEEIDVN) are excised as a propeptide.

The protein belongs to the scoloptoxin-07 family. In terms of processing, contains 3 disulfide bonds. Expressed by the venom gland.

It is found in the secreted. Functionally, inhibits voltage-gated potassium channels. In Scolopendra mutilans (Chinese red-headed centipede), this protein is Kappa-scoloptoxin(07)-Ssm2e.